A 452-amino-acid polypeptide reads, in one-letter code: Ribosomal protein uS12 methylthiotransferase RimO (452 aa).

The MTTase N-terminal domain occupies 3–122; sequence LTVGLISLGC…LPEIITQVMD (120 aa). [4Fe-4S] cluster is bound by residues Cys12, Cys48, Cys85, Cys162, Cys166, and Cys169. The Radical SAM core domain maps to 148 to 392; the sequence is LTPPHTAYIK…TLLLARLASE (245 aa). The TRAM domain occupies 395 to 452; sequence QEQIGRQIRVLVDAPGVARTEWDAPDIDGTVSVPLTLPVGQFATVTVTDAVAYELTAE.

This sequence belongs to the methylthiotransferase family. RimO subfamily. [4Fe-4S] cluster is required as a cofactor.

The protein localises to the cytoplasm. It carries out the reaction L-aspartate(89)-[ribosomal protein uS12]-hydrogen + (sulfur carrier)-SH + AH2 + 2 S-adenosyl-L-methionine = 3-methylsulfanyl-L-aspartate(89)-[ribosomal protein uS12]-hydrogen + (sulfur carrier)-H + 5'-deoxyadenosine + L-methionine + A + S-adenosyl-L-homocysteine + 2 H(+). Functionally, catalyzes the methylthiolation of an aspartic acid residue of ribosomal protein uS12. The polypeptide is Ribosomal protein uS12 methylthiotransferase RimO (Akkermansia muciniphila (strain ATCC BAA-835 / DSM 22959 / JCM 33894 / BCRC 81048 / CCUG 64013 / CIP 107961 / Muc)).